The following is a 941-amino-acid chain: MSDHSTFADRHIGLDSQAVATMLAVIGVDSLDDLAVKAVPAGILDTLTDTGAAPGLDSLPPAASEAEALAELRALADANTVAVSMIGQGYYDTHTPPVLLRNIIENPAWYTAYTPYQPEISQGRLEALLNFQTLVTDLTGLEIANASMLDEGTAAAEAMTLMHRAARGPVKRVVVDADVFTQTAAVLATRAKPLGIEIVTADLRAGLPDGEFFGAIAQLPGASGRITDWSALVQQAHDRGALVAVGADLLALTLIAPPGEIGADVAFGTTQRFGVPMGFGGPHAGYLAVHAKHARQLPGRLVGVSVDSDGTPAYRLALQTREQHIRRDKATSNICTAQVLLAVLAAMYASYHGAGGLTAIARRVHAHAEAIAGALGDALVHDKYFDTVLARVPGRADEVLARAKANGINLWRVDADHVSVACDEATTDTHVAVVLDAFGVAAAAPAHADIATRTSEFLTHPAFTQYRTETSMMRYLRALADKDIALDRSMIPLGSCTMKLNAAAEMESITWPEFGRQHPFAPASDTAGLRQLVADLQSWLVLITGYDAVSLQPNAGSQGEYAGLLAIHEYHASRGEPHRDICLIPSSAHGTNAASAALAGMRVVVVDCHDNGDVDLDDLRAKVGEHAERLSALMITYPSTHGVYEHDIAEICAAVHDAGGQVYVDGANLNALVGLARPGKFGGDVSHLNLHKTFCIPHGGGGPGVGPVAVRAHLAPFLPGHPFAPELPKGYPVSSAPYGSASILPITWAYIRMMGAEGLRAASLTAITSANYIARRLDEYYPVLYTGENGMVAHECILDLRGITKLTGITVDDVAKRLADYGFHAPTMSFPVAGTLMVEPTESESLAEVDAFCEAMIGIRAEIDKVGAGEWPVDDNPLRGAPHTAQCLLASDWDHPYTREQAAYPLGTAFRPKVWPAVRRIDGAYGDRNLVCSCPPVEAFA.

At Lys692 the chain carries N6-(pyridoxal phosphate)lysine.

The protein belongs to the GcvP family. The glycine cleavage system is composed of four proteins: P, T, L and H. Pyridoxal 5'-phosphate is required as a cofactor.

It carries out the reaction N(6)-[(R)-lipoyl]-L-lysyl-[glycine-cleavage complex H protein] + glycine + H(+) = N(6)-[(R)-S(8)-aminomethyldihydrolipoyl]-L-lysyl-[glycine-cleavage complex H protein] + CO2. Its function is as follows. The glycine cleavage system catalyzes the degradation of glycine. The P protein binds the alpha-amino group of glycine through its pyridoxal phosphate cofactor; CO(2) is released and the remaining methylamine moiety is then transferred to the lipoamide cofactor of the H protein. This chain is Glycine dehydrogenase (decarboxylating), found in Mycobacterium bovis (strain ATCC BAA-935 / AF2122/97).